The sequence spans 1124 residues: DNA-directed RNA polymerase subunit Rpo2 (1124 aa).

Residues cysteine 1061, cysteine 1064, cysteine 1079, and histidine 1082 each contribute to the Zn(2+) site.

It belongs to the RNA polymerase beta chain family. In terms of assembly, part of the 13-subunit RNA polymerase complex. Zn(2+) serves as cofactor.

It localises to the cytoplasm. It catalyses the reaction RNA(n) + a ribonucleoside 5'-triphosphate = RNA(n+1) + diphosphate. Its function is as follows. DNA-dependent RNA polymerase (RNAP) catalyzes the transcription of DNA into RNA using the four ribonucleoside triphosphates as substrates. This subunit is involved in DNA promoter recognition. The protein is DNA-directed RNA polymerase subunit Rpo2 of Saccharolobus solfataricus (strain ATCC 35092 / DSM 1617 / JCM 11322 / P2) (Sulfolobus solfataricus).